A 210-amino-acid chain; its full sequence is Two-component response regulator ORR7 (210 aa).

Residues Val-53–Tyr-92 form a disordered region. Residues Ser-61–Ala-88 are compositionally biased toward acidic residues. The 114-residue stretch at Tyr-92–Thr-205 folds into the Response regulatory domain. Asp-142 bears the 4-aspartylphosphate mark.

Belongs to the ARR family. Type-A subfamily. Post-translationally, two-component system major event consists of a His-to-Asp phosphorelay between a sensor histidine kinase (HK) and a response regulator (RR). In plants, the His-to-Asp phosphorelay involves an additional intermediate named Histidine-containing phosphotransfer protein (HPt). This multistep phosphorelay consists of a His-Asp-His-Asp sequential transfer of a phosphate group between first a His and an Asp of the HK protein, followed by the transfer to a conserved His of the HPt protein and finally the transfer to an Asp in the receiver domain of the RR protein.

In terms of biological role, functions as a response regulator involved in His-to-Asp phosphorelay signal transduction system. Phosphorylation of the Asp residue in the receiver domain activates the ability of the protein to promote the transcription of target genes. Type-A response regulators seem to act as negative regulators of the cytokinin signaling. In Oryza sativa subsp. japonica (Rice), this protein is Two-component response regulator ORR7.